A 1148-amino-acid polypeptide reads, in one-letter code: Pyruvate carboxylase (1148 aa).

In terms of domain architecture, Biotin carboxylation spans 1–457; that stretch reads MSQQSIQKVL…DTSFIDTTPE (457 aa). Residues K121, E205, and H240 each contribute to the ATP site. One can recognise an ATP-grasp domain in the interval 125–321; that stretch reads REQAEKAGIP…IVQTQILVAQ (197 aa). K242 is a catalytic residue. The Pyruvate carboxyltransferase domain maps to 534–802; it reads VLLTDTTFRD…RPEMNVQGVE (269 aa). Substrate-binding positions include 542 to 546 and R615; that span reads RDAHQ. Residue D543 coordinates a divalent metal cation. A divalent metal cation-binding residues include K712, H741, and H743. The residue at position 712 (K712) is an N6-carboxylysine. Substrate is bound at residue T876. In terms of domain architecture, Biotinyl-binding spans 1071 to 1146; sequence KADRTNPSHI…QTGDLLLEIE (76 aa). At K1112 the chain carries N6-biotinyllysine.

As to quaternary structure, homotetramer. At very low potassium concentrations, when intracellular levels of c-di-AMP are low, interacts with apo-DarB. c-di-AMP inhibits the binding of DarB to PYC. Does not bind directly c-di-AMP. The cofactor is biotin.

It carries out the reaction hydrogencarbonate + pyruvate + ATP = oxaloacetate + ADP + phosphate + H(+). With respect to regulation, activated by the cyclic di-AMP (c-di-AMP) receptor DarB in the absence of c-di-AMP. Allosterically activated by acetyl-CoA. Inhibited by the biotin-complexing protein avidin. Catalyzes a 2-step reaction, involving the ATP-dependent carboxylation of the covalently attached biotin in the first step and the transfer of the carboxyl group to pyruvate in the second, leading to oxaloacetate production. Fulfills an anaplerotic function in B.subtilis as it is necessary for growth on glucose, but is not required for sporulation. This is Pyruvate carboxylase (pyc) from Bacillus subtilis (strain 168).